The primary structure comprises 520 residues: Calcium and calcium/calmodulin-dependent serine/threonine-protein kinase (520 aa).

The Protein kinase domain occupies Tyr-13–Val-302. Residues Leu-19–Val-27 and Lys-44 contribute to the ATP site. The Proton acceptor role is filled by Asp-167. Residues Met-227–Pro-243 traverse the membrane as a helical segment. At Thr-267 the chain carries Phosphothreonine; by autocatalysis. The interval Ala-325–Leu-338 is calmodulin-binding. Residues Thr-346–Ala-368 adopt a coiled-coil conformation. 4 consecutive EF-hand domains span residues Glu-361–Asn-395, Ser-396–Ser-431, Gln-432–Asp-467, and Thr-474–Leu-509. 14 residues coordinate Ca(2+): Asp-409, Asn-411, Asp-413, Thr-415, Glu-420, Asp-445, Asp-447, Ser-449, Cys-451, Glu-456, Asp-487, Asn-489, Asp-491, and Glu-498.

It belongs to the protein kinase superfamily. CAMK Ser/Thr protein kinase family. CaMK subfamily. Post-translationally, autophosphorylation stimulated by calcium and inhibited by calcium/calmodulin. Occurs probably by an intermolecular mechanism.

It is found in the membrane. The enzyme catalyses L-seryl-[protein] + ATP = O-phospho-L-seryl-[protein] + ADP + H(+). It catalyses the reaction L-threonyl-[protein] + ATP = O-phospho-L-threonyl-[protein] + ADP + H(+). With respect to regulation, activated by calcium/calmodulin binding after calcium-induced autophosphorylation. Autophosphorylation is associated with a time-dependent loss of kinase activity sensitive to reaction pH and ATP concentration. In vitro inactivation leads to the formation of network-like structures. Protein kinase that may be involved in microsporogenesis. The polypeptide is Calcium and calcium/calmodulin-dependent serine/threonine-protein kinase (CCAMK) (Lilium longiflorum (Trumpet lily)).